Consider the following 650-residue polypeptide: 1-deoxy-D-xylulose-5-phosphate synthase (650 aa).

Thiamine diphosphate contacts are provided by residues H73 and 113–115 (SHA). D145 provides a ligand contact to Mg(2+). Thiamine diphosphate is bound by residues 146–147 (GA), N175, Y287, and E369. Residue N175 coordinates Mg(2+).

It belongs to the transketolase family. DXPS subfamily. In terms of assembly, homodimer. It depends on Mg(2+) as a cofactor. Requires thiamine diphosphate as cofactor.

The enzyme catalyses D-glyceraldehyde 3-phosphate + pyruvate + H(+) = 1-deoxy-D-xylulose 5-phosphate + CO2. The protein operates within metabolic intermediate biosynthesis; 1-deoxy-D-xylulose 5-phosphate biosynthesis; 1-deoxy-D-xylulose 5-phosphate from D-glyceraldehyde 3-phosphate and pyruvate: step 1/1. Its function is as follows. Catalyzes the acyloin condensation reaction between C atoms 2 and 3 of pyruvate and glyceraldehyde 3-phosphate to yield 1-deoxy-D-xylulose-5-phosphate (DXP). The chain is 1-deoxy-D-xylulose-5-phosphate synthase from Leifsonia xyli subsp. xyli (strain CTCB07).